We begin with the raw amino-acid sequence, 567 residues long: Thiol:disulfide interchange protein DsbD (567 aa).

Positions 1-19 are cleaved as a signal peptide; sequence MAQRIFTLILLLCSTSAFA. Intrachain disulfides connect C122-C128 and C185-C307. Transmembrane regions (helical) follow at residues 170-192, 212-234, 246-268, 297-319, 326-348, 358-380, and 387-409; these read ALWA…MYPL, LAFI…VAAA, YVLI…LFTL, GAIA…LLYI, WLGG…LVTV, GPWM…VFLL, and AWGL…ITSL. Positions 435 to 567 constitute a Thioredoxin domain; it reads QDWAFGSPSA…FSAHLHDRQP (133 aa). C482 and C485 form a disulfide bridge.

The protein belongs to the thioredoxin family. DsbD subfamily.

It localises to the cell inner membrane. It catalyses the reaction [protein]-dithiol + NAD(+) = [protein]-disulfide + NADH + H(+). The catalysed reaction is [protein]-dithiol + NADP(+) = [protein]-disulfide + NADPH + H(+). In terms of biological role, required to facilitate the formation of correct disulfide bonds in some periplasmic proteins and for the assembly of the periplasmic c-type cytochromes. Acts by transferring electrons from cytoplasmic thioredoxin to the periplasm. This transfer involves a cascade of disulfide bond formation and reduction steps. This chain is Thiol:disulfide interchange protein DsbD, found in Salmonella typhimurium (strain LT2 / SGSC1412 / ATCC 700720).